The following is a 358-amino-acid chain: Alpha-ketoglutarate-dependent L-arginine hydroxylase (358 aa).

Residues 1-21 (MTESPTTHHGAAPPDSVATPV) form a disordered region. Residues 117 to 135 (LSFLLMLYAGLLGDVFGWA) form a helical membrane-spanning segment. Position 156 to 158 (156 to 158 (LVS)) interacts with L-arginine. Positions 168 and 170 each coordinate Fe cation. A 2-oxoglutarate-binding site is contributed by T194. 268–270 (DGD) contacts L-arginine. H316 contacts Fe cation. 2-oxoglutarate contacts are provided by R330 and R334. R334 is a binding site for L-arginine.

The protein belongs to the clavaminate synthase family. Fe cation serves as cofactor.

The protein localises to the membrane. The catalysed reaction is L-arginine + 2-oxoglutarate + O2 = (2S,3S)-hydroxyarginine + succinate + CO2. The protein operates within antibiotic biosynthesis. Involved in the biosynthesis of capreomycidine, an unusual amino acid used by non-ribosomal peptide synthases (NRPS) to make the tuberactinomycin class of peptide antibiotics such as viomycin and capreomycin. Catalyzes the stereospecific hydroxylation of the C3 of (2S)-arginine to generate (3S)-hydroxy-(2S)-arginine. Usually clavaminic acid synthase-like oxygenases catalyze the formation of threo diastereomers, however VioC produces the erythro diastereomer of beta-carbon-hydroxylated L-arginine. It exerts a broad substrate specificity by accepting the analogs L-homoarginine and L-canavanine for the beta-carbon hydroxylation. The polypeptide is Alpha-ketoglutarate-dependent L-arginine hydroxylase (vioC) (Streptomyces vinaceus).